Reading from the N-terminus, the 103-residue chain is Large ribosomal subunit protein bL21 (103 aa).

The protein belongs to the bacterial ribosomal protein bL21 family. In terms of assembly, part of the 50S ribosomal subunit. Contacts protein L20.

Its function is as follows. This protein binds to 23S rRNA in the presence of protein L20. The protein is Large ribosomal subunit protein bL21 of Kocuria rhizophila (strain ATCC 9341 / DSM 348 / NBRC 103217 / DC2201).